The primary structure comprises 156 residues: Lipoprotein signal peptidase (156 aa).

3 consecutive transmembrane segments (helical) span residues 5 to 25 (FKFI…DQWV), 64 to 84 (YLHL…KTLL), and 89 to 109 (IAFG…FIYG). Residues aspartate 113 and aspartate 130 contribute to the active site. Residues 122–142 (NFAIFNVADVMINISVALILI) form a helical membrane-spanning segment.

Belongs to the peptidase A8 family.

The protein resides in the cell inner membrane. It carries out the reaction Release of signal peptides from bacterial membrane prolipoproteins. Hydrolyzes -Xaa-Yaa-Zaa-|-(S,diacylglyceryl)Cys-, in which Xaa is hydrophobic (preferably Leu), and Yaa (Ala or Ser) and Zaa (Gly or Ala) have small, neutral side chains.. It functions in the pathway protein modification; lipoprotein biosynthesis (signal peptide cleavage). Its function is as follows. This protein specifically catalyzes the removal of signal peptides from prolipoproteins. This chain is Lipoprotein signal peptidase, found in Campylobacter jejuni subsp. doylei (strain ATCC BAA-1458 / RM4099 / 269.97).